The following is a 648-amino-acid chain: UDP-galactose:fucoside alpha-3-galactosyltransferase (648 aa).

WD repeat units lie at residues 320 to 358, 372 to 420, 422 to 461, 464 to 505, 507 to 546, 556 to 595, and 617 to 648; these read NHTD…GNDT, HKRG…IQTF, GHTG…FKRV, GHNG…NIIK, NQGG…NFND, NENS…NNNN, and HLNS…SWDL.

The protein belongs to the glycosyltransferase 77 family. Requires Mn(2+) as cofactor.

The protein resides in the cytoplasm. The enzyme catalyses an alpha-L-fucosyl-(1-&gt;2)-beta-D-galactosyl derivative + UDP-alpha-D-galactose = an alpha-D-galactosyl-(1-&gt;3)-[alpha-L-fucosyl-(1-&gt;2)]-beta-D-galactosyl derivative + UDP + H(+). Its pathway is protein modification; protein glycosylation. Stimulated by dithiothreitol (DTT) in vitro. Totally inhibited by EDTA. Functionally, specifically catalyzes the transfer of a galactosyl residue to the hydroxyproline-linked saccharide on Skp1 protein (fpaA/fpaB). Catalyzes the formation of a Gal-alpha-1,3-Fuc linkage, leading to Gal-Fuc-Gal-GlcNAc-HyPro143-Skp1. In Dictyostelium discoideum (Social amoeba), this protein is UDP-galactose:fucoside alpha-3-galactosyltransferase (agtA).